The primary structure comprises 28 residues: U-actitoxin-Ate1 (28 aa).

Residues 1 to 15 (MSLILIFFAFTVLKS) form the signal peptide. C20 and C26 are joined by a disulfide.

In terms of assembly, monomer in solution. Post-translationally, may be N-glycosylated at Asn-22. Activity with this modification has not be tested. As to expression, highly expressed in the tentacles. Weakly expressed in acrorhagi and mesenteric filaments.

It is found in the secreted. The protein localises to the nematocyst. Functionally, probable toxin expected to be employed in prey capture and/or defense against predators (based on its abundance in tentacles). Has only a weak affinity for lipid membranes. Shows moderate cytotoxic activity against breast cancer cell lines (MCF-7 and MDA-MB-231). The polypeptide is U-actitoxin-Ate1 (Actinia tenebrosa (Australian red waratah sea anemone)).